A 525-amino-acid polypeptide reads, in one-letter code: Hydroxyneurosporene desaturase (525 aa).

It belongs to the carotenoid/retinoid oxidoreductase family.

It carries out the reaction rhodopin + A = (3E)-3,4-didehydrorhodopin + AH2. Its pathway is carotenoid biosynthesis; spheroidene biosynthesis. Its function is as follows. Catalyzes the introduction of C-3,4 double bonds into 1-hydroxyneurosporene (1-HO-Neu) to yield demethylspheroidene (DMS). The preferred substrates are 1-hydroxy-neurosporene, 1-hydroxy-lycopene and 1,1-dihydroxyneurosporene, however the 3,4-didehydrolycopene derivatives such as 1,1-dihydroxy-3,4-didehydrolycopene, 1-methoxy-1-hydroxy-3,4-didehydrolycopene and 1-hydroxy-3,4-didehydrolycopene are also efficiently converted. 1-HO-carotene derivatives can be also used. In Rubrivivax gelatinosus (Rhodocyclus gelatinosus), this protein is Hydroxyneurosporene desaturase (crtD).